The following is a 570-amino-acid chain: Protein misato homolog 1 (570 aa).

Ser495 carries the phosphoserine modification.

The protein belongs to the misato family. As to expression, present in all cell lines tested (at protein level). Widely expressed.

The protein localises to the mitochondrion outer membrane. Its subcellular location is the cytoplasm. Functionally, involved in the regulation of mitochondrial distribution and morphology. Required for mitochondrial fusion and mitochondrial network formation. This is Protein misato homolog 1 (MSTO1) from Homo sapiens (Human).